The sequence spans 739 residues: UPF0313 protein YgiQ (739 aa).

A Radical SAM core domain is found at 372–650 (AYEMIRFSVN…KALLRYHDPA (279 aa)). Positions 386, 390, and 393 each coordinate [4Fe-4S] cluster. The interval 685-739 (REARRQNRNTRPALTKHTPMATQRQTPATAKKASSTQSRPVNAGAKKRPKAAVGR) is disordered. The segment covering 704–724 (MATQRQTPATAKKASSTQSRP) has biased composition (polar residues). The segment covering 729-739 (AKKRPKAAVGR) has biased composition (basic residues).

This sequence belongs to the UPF0313 family. The cofactor is [4Fe-4S] cluster.

The protein is UPF0313 protein YgiQ of Shigella flexneri.